The primary structure comprises 187 residues: Ribosome-recycling factor (187 aa).

Belongs to the RRF family.

The protein resides in the cytoplasm. Its function is as follows. Responsible for the release of ribosomes from messenger RNA at the termination of protein biosynthesis. May increase the efficiency of translation by recycling ribosomes from one round of translation to another. The sequence is that of Ribosome-recycling factor from Methylobacterium sp. (strain 4-46).